Reading from the N-terminus, the 441-residue chain is 4-hydroxybenzoate polyprenyltransferase, mitochondrial (441 aa).

The N-terminal 95 residues, 1–95 (MLRKLTSNSS…TLGELVLRDY (95 aa)), are a transit peptide targeting the mitochondrion. A run of 8 helical transmembrane segments spans residues 129–149 (IGSWLLFWPCGWSIALSAPAG), 154–174 (LWTLTLFGAGAFIMRGAGCTI), 204–224 (AWFFLGAQLGVGLLILLELNW), 225–245 (YSIVLGASSLGLVIIYPLMKR), 246–266 (ITHWPQLVLGMTFNWGALLGW), 271–291 (GSVMWSACLPLYVAGVCWTIV), 322–342 (LWLSGFSTAMIGGLVASGMVC), and 378–398 (FISNHQVGLILFLGIVLGTLY). The disordered stretch occupies residues 405–441 (AGKSSTTSSSSTSSSSSPSSGLLLAATNHHQPARQAS). Low complexity predominate over residues 408–424 (SSTTSSSSTSSSSSPSS). A compositionally biased stretch (polar residues) spans 432 to 441 (NHHQPARQAS).

This sequence belongs to the UbiA prenyltransferase family. Requires Mg(2+) as cofactor.

It is found in the mitochondrion inner membrane. It carries out the reaction an all-trans-polyprenyl diphosphate + 4-hydroxybenzoate = a 4-hydroxy-3-(all-trans-polyprenyl)benzoate + diphosphate. Its pathway is cofactor biosynthesis; ubiquinone biosynthesis. Catalyzes the prenylation of para-hydroxybenzoate (PHB) with an all-trans polyprenyl group. Mediates the second step in the final reaction sequence of coenzyme Q (CoQ) biosynthesis, which is the condensation of the polyisoprenoid side chain with PHB, generating the first membrane-bound Q intermediate. This chain is 4-hydroxybenzoate polyprenyltransferase, mitochondrial, found in Aedes aegypti (Yellowfever mosquito).